Here is a 254-residue protein sequence, read N- to C-terminus: Type III pantothenate kinase (254 aa).

An ATP-binding site is contributed by 6 to 13 (DVGNTNTV). Substrate-binding positions include tyrosine 100 and 107-110 (GADR). The active-site Proton acceptor is the aspartate 109. Position 129 (aspartate 129) interacts with K(+). ATP is bound at residue threonine 132. Threonine 184 lines the substrate pocket.

This sequence belongs to the type III pantothenate kinase family. In terms of assembly, homodimer. Requires NH4(+) as cofactor. It depends on K(+) as a cofactor.

The protein localises to the cytoplasm. It carries out the reaction (R)-pantothenate + ATP = (R)-4'-phosphopantothenate + ADP + H(+). It functions in the pathway cofactor biosynthesis; coenzyme A biosynthesis; CoA from (R)-pantothenate: step 1/5. In terms of biological role, catalyzes the phosphorylation of pantothenate (Pan), the first step in CoA biosynthesis. The chain is Type III pantothenate kinase from Anaeromyxobacter sp. (strain Fw109-5).